The following is a 437-amino-acid chain: MGLRAAPSSAAAAAAEVEQRRSPGLCPPPLELLLLLLFSLGLLHAGDCQQPAQCRIQKCTTDFVSLTSHLNSAVDGFDSEFCKALRAYAGCTQRTSKACRGNLVYHSAVLGISDLMSQRNCSKDGPTSSTNPEVTHDPCNYHSHAGAREHRRGDQNPPSYLFCGLFGDPHLRTFKDNFQTCKVEGAWPLIDNNYLSVQVTNVPVVPGSSATATNKITIIFKAHHECTDQKVYQAVTDDLPAAFVDGTTSGGDSDAKSLRIVERESGHYVEMHARYIGTTVFVRQVGRYLTLAIRMPEDLAMSYEESQDLQLCVNGCPLSERIDDGQGQVSAILGHSLPRTSLVQAWPGYTLETANTQCHEKMPVKDIYFQSCVFDLLTTGDANFTAAAHSALEDVEALHPRKERWHIFPSSGNGTPRGGSDLSVSLGLTCLILIVFL.

A signal peptide spans methionine 1 to alanine 45. Asparagine 120 carries an N-linked (GlcNAc...) asparagine glycan. Positions cysteine 121 to glutamate 133 are enriched in polar residues. The interval cysteine 121–glycine 153 is disordered. Cystine bridges form between cysteine 139-cysteine 226 and cysteine 163-cysteine 312. A glycan (N-linked (GlcNAc...) asparagine) is linked at asparagine 383. A lipid anchor (GPI-anchor amidated asparagine) is attached at asparagine 413. Residues glycine 414–leucine 437 constitute a propeptide, removed in mature form.

The protein belongs to the repulsive guidance molecule (RGM) family. In terms of assembly, homooligomer. Interacts with DRGX. Interacts with BMP2 and BMP4. Interacts with the BMP type I receptors ACVR1, BMPR1A and BMPR1B and with the BMP type II receptor ACVR2B. The functional complex with its receptor NEO1/neogenin appears to be a heterotetramer with a 2:2 stoichiometry, RGM molecules acting as staples that bring two NEO1 receptors together without interacting themselves, this arrangement leads to activation of downstream signaling via RhoA. GPI-anchored. Post-translationally, autocatalytically cleaved at low pH; the two chains remain linked via two disulfide bonds.

The protein resides in the cell membrane. Its subcellular location is the membrane raft. Its function is as follows. Member of the repulsive guidance molecule (RGM) family that contributes to the patterning of the developing nervous system. Acts as a bone morphogenetic protein (BMP) coreceptor that potentiates BMP signaling. Promotes neuronal adhesion. May inhibit neurite outgrowth. The polypeptide is Repulsive guidance molecule B (Homo sapiens (Human)).